The chain runs to 1384 residues: DNA-directed RNA polymerase subunit beta (1384 aa).

The protein belongs to the RNA polymerase beta chain family. The RNAP catalytic core consists of 2 alpha, 1 beta, 1 beta' and 1 omega subunit. When a sigma factor is associated with the core the holoenzyme is formed, which can initiate transcription.

It catalyses the reaction RNA(n) + a ribonucleoside 5'-triphosphate = RNA(n+1) + diphosphate. In terms of biological role, DNA-dependent RNA polymerase catalyzes the transcription of DNA into RNA using the four ribonucleoside triphosphates as substrates. This is DNA-directed RNA polymerase subunit beta from Stenotrophomonas maltophilia (strain R551-3).